Reading from the N-terminus, the 211-residue chain is Claudin-7 (211 aa).

Over 1–7 the chain is Cytoplasmic; it reads MANSGLQ. The chain crosses the membrane as a helical span at residues 8-28; it reads LLGFSMAMLGWVGLIASTAIP. Residues 29-81 are Extracellular-facing; that stretch reads QWQMSSYAGDNIITAQAMYKGLWMECVTQSTGMMSCKMYDSVLALPAATQATR. The chain crosses the membrane as a helical span at residues 82–102; sequence ALMIVSLVLGFLAMFVATMGM. At 103 to 119 the chain is on the cytoplasmic side; sequence KCTRCGGDDKVKKARIA. The helical transmembrane segment at 120 to 140 threads the bilayer; the sequence is MTGGIIFIVAGLAALVACSWI. Over 141–160 the chain is Extracellular; sequence GHQIVTDFYNPLTPMNIKYE. Residues 161-181 traverse the membrane as a helical segment; that stretch reads FGPAIFIGWAGSALVLLGGAL. Residues 182–211 are Cytoplasmic-facing; it reads LSCSCPGSESKAAYRAPRSYPKSNSSKEYV. The segment at 210 to 211 is interactions with TJP1, TJP2 and TJP3; sequence YV.

Belongs to the claudin family. Directly interacts with TJP1/ZO-1, TJP2/ZO-2 and TJP3/ZO-3. The phosphorylated form interacts with EPCAM. Phosphorylated.

The protein localises to the cell membrane. It is found in the basolateral cell membrane. Its subcellular location is the cell junction. The protein resides in the tight junction. In terms of biological role, plays a major role in tight junction-specific obliteration of the intercellular space. The polypeptide is Claudin-7 (Cldn7) (Rattus norvegicus (Rat)).